Here is a 652-residue protein sequence, read N- to C-terminus: DNA ligase (652 aa).

NAD(+)-binding positions include aspartate 29 to aspartate 33, serine 78 to leucine 79, and glutamate 107. The active-site N6-AMP-lysine intermediate is lysine 109. NAD(+) contacts are provided by arginine 130, glutamate 164, lysine 278, and lysine 302. Cysteine 395, cysteine 398, cysteine 413, and cysteine 418 together coordinate Zn(2+). In terms of domain architecture, BRCT spans valine 577–leucine 652.

Belongs to the NAD-dependent DNA ligase family. LigA subfamily. Requires Mg(2+) as cofactor. The cofactor is Mn(2+).

The enzyme catalyses NAD(+) + (deoxyribonucleotide)n-3'-hydroxyl + 5'-phospho-(deoxyribonucleotide)m = (deoxyribonucleotide)n+m + AMP + beta-nicotinamide D-nucleotide.. Functionally, DNA ligase that catalyzes the formation of phosphodiester linkages between 5'-phosphoryl and 3'-hydroxyl groups in double-stranded DNA using NAD as a coenzyme and as the energy source for the reaction. It is essential for DNA replication and repair of damaged DNA. In Streptococcus pneumoniae (strain P1031), this protein is DNA ligase.